Consider the following 638-residue polypeptide: Epithelial sodium channel subunit beta (638 aa).

The Cytoplasmic portion of the chain corresponds to 1–50; it reads MPVKKYLLKCLHRLQKGPGYTYKELLVWYCNNTNTHGPKRIICEGPKKKA. The helical transmembrane segment at 51 to 71 threads the bilayer; it reads MWFLLTLLFACLVCWQWGVFI. Residues 72–530 lie on the Extracellular side of the membrane; the sequence is QTYLSWEVSV…GGQFGFWMGG (459 aa). Disulfide bonds link cysteine 98–cysteine 270, cysteine 182–cysteine 187, cysteine 194–cysteine 201, cysteine 247–cysteine 254, cysteine 359–cysteine 446, cysteine 384–cysteine 442, cysteine 388–cysteine 438, cysteine 397–cysteine 424, and cysteine 399–cysteine 413. 2 N-linked (GlcNAc...) asparagine glycosylation sites follow: asparagine 135 and asparagine 141. Residues 531 to 551 form a helical membrane-spanning segment; the sequence is SVLCLIEFGEIIIDFIWITVI. The Cytoplasmic portion of the chain corresponds to 552–638; sequence KLVASCKGLR…MESDSEVEAI (87 aa). Residues 598-620 form a disordered region; sequence NAEVYPDQQTLPIPGTPPPNYDS. Residues 614–618 carry the PY motif; recruits WW domain-containing proteins and is thereby required for ubiquitination and inhibition of the channel by NEDD4 and NEDD4L motif; it reads PPPNY. Residues serine 631 and serine 633 each carry the phosphoserine modification.

It belongs to the amiloride-sensitive sodium channel (TC 1.A.6) family. SCNN1B subfamily. As to quaternary structure, component of the heterotrimeric epithelial sodium channel (ENaC) composed of an alpha/SCNN1A, a beta/SCNN1B and a gamma/SCNN1G subunit. Interacts with WWP1 (via WW domains). Interacts with WWP2 (via WW domains). Interacts with the full-length immature form of PCSK9 (pro-PCSK9). Interacts (N-glycosylated) with BPIFA1; the interaction is direct and inhibits the proteolytic processing of SCNN1A and SCNN1G and the activation of ENaC. Ubiquitinated. Can be ubiquitinated at multiple sites and undergo monoubiquitination and polyubiquitination. Ubiquitination by NEDD4 or NEDD4L inhibits the ENaC channel through endocytosis, intracellular retention and degradation of its individual subunits. However, some studies could not confirm the ubiquitination of this subunit of the ENaC. In terms of processing, N-glycosylated. N-glycosylation is required for interaction with BPIFA1. Post-translationally, phosphorylated on serine and threonine residues. Aldosterone and insulin increase the basal level of phosphorylation. As to expression, expressed in lung and epididymis. In the caput region of the epididymis, expressed at the luminal and basolateral surfaces of the ducts and in the smooth muscle coat. In the caudal region of the epididymis, expressed along the luminal border but not continuously, in the smooth muscle coat, in the interstitial muscle tissue and in sperm in the caudal lumen.

The protein localises to the apical cell membrane. The protein resides in the cytoplasmic vesicle membrane. The enzyme catalyses Na(+)(in) = Na(+)(out). With respect to regulation, originally identified and characterized by its inhibition by the diuretic drug amiloride. This is one of the three pore-forming subunits of the heterotrimeric epithelial sodium channel (ENaC), a critical regulator of sodium balance and fluid homeostasis. ENaC operates in epithelial tissues, where it mediates the electrodiffusion of sodium ions from extracellular fluid through the apical membrane of cells, with water following osmotically. It plays a key role in maintaining sodium homeostasis through electrogenic sodium reabsorption in the kidneys. This subunit is not essential for ENaC function in airway surface liquid homeostasis and proper mucus clearance. This chain is Epithelial sodium channel subunit beta, found in Rattus norvegicus (Rat).